Here is a 603-residue protein sequence, read N- to C-terminus: Isocitrate dehydrogenase kinase/phosphatase (603 aa).

ATP contacts are provided by residues 327–333 and Lys348; that span reads APGIKGL. Asp383 is an active-site residue.

This sequence belongs to the AceK family.

It is found in the cytoplasm. The catalysed reaction is L-seryl-[isocitrate dehydrogenase] + ATP = O-phospho-L-seryl-[isocitrate dehydrogenase] + ADP + H(+). Bifunctional enzyme which can phosphorylate or dephosphorylate isocitrate dehydrogenase (IDH) on a specific serine residue. This is a regulatory mechanism which enables bacteria to bypass the Krebs cycle via the glyoxylate shunt in response to the source of carbon. When bacteria are grown on glucose, IDH is fully active and unphosphorylated, but when grown on acetate or ethanol, the activity of IDH declines drastically concomitant with its phosphorylation. The chain is Isocitrate dehydrogenase kinase/phosphatase from Burkholderia mallei (strain ATCC 23344).